The sequence spans 692 residues: Elongation factor G (692 aa).

Positions 8–282 (DKTRNIGIMA…AVLDYLPAPT (275 aa)) constitute a tr-type G domain. GTP contacts are provided by residues 17–24 (AHIDAGKT), 81–85 (DTPGH), and 135–138 (NKMD).

The protein belongs to the TRAFAC class translation factor GTPase superfamily. Classic translation factor GTPase family. EF-G/EF-2 subfamily.

It localises to the cytoplasm. Functionally, catalyzes the GTP-dependent ribosomal translocation step during translation elongation. During this step, the ribosome changes from the pre-translocational (PRE) to the post-translocational (POST) state as the newly formed A-site-bound peptidyl-tRNA and P-site-bound deacylated tRNA move to the P and E sites, respectively. Catalyzes the coordinated movement of the two tRNA molecules, the mRNA and conformational changes in the ribosome. In Bacillus pumilus (strain SAFR-032), this protein is Elongation factor G.